The chain runs to 126 residues: Large ribosomal subunit protein bL12 (126 aa).

It belongs to the bacterial ribosomal protein bL12 family. Homodimer. Part of the ribosomal stalk of the 50S ribosomal subunit. Forms a multimeric L10(L12)X complex, where L10 forms an elongated spine to which 2 to 4 L12 dimers bind in a sequential fashion. Binds GTP-bound translation factors.

Functionally, forms part of the ribosomal stalk which helps the ribosome interact with GTP-bound translation factors. Is thus essential for accurate translation. This chain is Large ribosomal subunit protein bL12, found in Teredinibacter turnerae (strain ATCC 39867 / T7901).